The sequence spans 304 residues: Murein tetrapeptide carboxypeptidase (304 aa).

Serine 106 functions as the Nucleophile in the catalytic mechanism. Catalysis depends on charge relay system residues glutamate 200 and histidine 270.

Belongs to the peptidase S66 family.

Its subcellular location is the cytoplasm. The catalysed reaction is N-acetyl-D-glucosaminyl-N-acetylmuramoyl-L-alanyl-meso-2,6-diaminoheptanedioyl-D-alanine + H2O = N-acetyl-D-glucosaminyl-N-acetylmuramoyl-L-alanyl-meso-2,6-diaminoheptanedioate + D-alanine. It participates in cell wall biogenesis; peptidoglycan recycling. Releases the terminal D-alanine residue from the cytoplasmic tetrapeptide recycling product L-Ala-gamma-D-Glu-meso-Dap-D-Ala. Can also cleave D-Ala from murein derivatives containing the tetrapeptide, i.e. MurNAc-tetrapeptide, UDP-MurNAc-tetrapeptide, GlcNAc-MurNAc-tetrapeptide, and GlcNAc-anhMurNAc-tetrapeptide. Does not act on murein sacculi or cross-linked muropeptides. The tripeptides produced by the LcdA reaction can then be reused as peptidoglycan building blocks; LcdA is thereby involved in murein recycling. The sequence is that of Murein tetrapeptide carboxypeptidase (ldcA) from Escherichia coli O157:H7.